A 109-amino-acid polypeptide reads, in one-letter code: Small ribosomal subunit protein eS25 (109 aa).

Residues 1 to 13 (MVKKIQESKEKKA) show a composition bias toward basic and acidic residues. Residues 1 to 34 (MVKKIQESKEKKALKAASGTRKDKKKWGDGRKKE) form a disordered region.

Belongs to the eukaryotic ribosomal protein eS25 family.

The sequence is that of Small ribosomal subunit protein eS25 (RPS25-1) from Encephalitozoon cuniculi (strain GB-M1) (Microsporidian parasite).